The sequence spans 463 residues: Myocyte-specific enhancer factor 2C (463 aa).

In terms of domain architecture, MADS-box spans 3–57; it reads RKKIQITRIMDERNRQVTFTKRKFGLMKKAYELSVLCDCEIALIIFNSTNKLFQY. Position 4 is an N6-acetyllysine (lysine 4). Residues 58-86 constitute a DNA-binding region (mef2-type); it reads ASTDMDKVLLKYTEYNEPHESRTNSDIVE. Serine 59 is subject to Phosphoserine; by CK2. 2 positions are modified to phosphoserine: serine 98 and serine 104. N6-acetyllysine is present on residues lysine 114 and lysine 117. The interval 178–223 is disordered; it reads NSMSPGVTHRPPSAGNTGGLMGGDLTSGAGTSAGNGYGNPRNSPGL. 2 positions are modified to phosphoserine: serine 220 and serine 226. 2 positions are modified to N6-acetyllysine: lysine 232 and lysine 237. At serine 238 the chain carries Phosphoserine. An N6-acetyllysine mark is found at lysine 250 and lysine 262. Phosphothreonine; by MAPK7 and MAPK14 occurs at positions 283 and 290. The segment at 358–389 is transcription repressor; it reads ACTSTHLSQSSNLSLPSTQSLNIKSEPVSPPR. The span at 365 to 380 shows a compositional bias: polar residues; the sequence is SQSSNLSLPSTQSLNI. A disordered region spans residues 365-463; the sequence is SQSSNLSLPS…RMRLSEGWAT (99 aa). A Glycyl lysine isopeptide (Lys-Gly) (interchain with G-Cter in SUMO) cross-link involves residue lysine 381. Phosphoserine; by CDK5 is present on serine 386. Serine 409 is modified (phosphoserine; by MAPK7). Low complexity predominate over residues 409–422; that stretch reads SPVDSLSSCSSSYD. Residues 423–433 show a composition bias toward basic and acidic residues; that stretch reads GSDREDHRNEF. The residue at position 435 (serine 435) is a Phosphoserine.

As to quaternary structure, forms a complex with class II HDACs in undifferentiating cells. On myogenic differentiation, HDACs are released into the cytoplasm allowing MEF2s to interact with other proteins for activation. Interacts with EP300 in differentiating cells; the interaction acetylates MEF2C leading to increased DNA binding and activation. Interacts with HDAC7 and CARM1. Interacts with HDAC4, HDAC7 and HDAC9; the interaction with HDACs represses transcriptional activity. Interacts with LPIN1. Interacts with MYOCD. Interacts with AKAP13. Interacts with FOXK1; the interaction inhibits MEF2C transactivation activity. Interacts (via N-terminus) with HABP4; this interaction decreases DNA-binding activity of MEF2C in myocardial cells in response to mechanical stress. Interacts with JPH2; interaction specifically takes place with the Junctophilin-2 N-terminal fragment cleavage product of JPH2. Interacts (via MADS box) with SOX18. Interacts with PHF7; the interaction promotes MEF2C binding to its transcription targets. Phosphorylated on Ser-59; which enhances DNA binding activity. Phosphorylated on Ser-386; which is required for Lys-381 sumoylation and inhibits transcriptional activity. Post-translationally, acetylated by p300 on several sites in diffentiating myocytes. Acetylation on Lys-4 increases DNA binding and transactivation. In terms of processing, sumoylated on Lys-381 with SUMO2 but not SUMO1; which represses transcriptional activity. Proteolytically cleaved in cerebellar granule neurons on several sites by caspase 3 and caspase 7 following neurotoxicity. Preferentially cleaves the CDK5-mediated hyperphosphorylated form which leads to neuron apoptosis and transcriptional inactivation.

It localises to the nucleus. The protein localises to the cytoplasm. The protein resides in the sarcoplasm. In terms of biological role, transcription activator which binds specifically to the MEF2 element present in the regulatory regions of many muscle-specific genes. Controls cardiac morphogenesis and myogenesis, and is also involved in vascular development. Enhances transcriptional activation mediated by SOX18. Plays an essential role in hippocampal-dependent learning and memory by suppressing the number of excitatory synapses and thus regulating basal and evoked synaptic transmission. Crucial for normal neuronal development, distribution, and electrical activity in the neocortex. Necessary for proper development of megakaryocytes and platelets and for bone marrow B-lymphopoiesis. Required for B-cell survival and proliferation in response to BCR stimulation, efficient IgG1 antibody responses to T-cell-dependent antigens and for normal induction of germinal center B-cells. May also be involved in neurogenesis and in the development of cortical architecture. This Sus scrofa (Pig) protein is Myocyte-specific enhancer factor 2C.